The following is a 608-amino-acid chain: Albumin (608 aa).

A signal peptide spans 1–18 (MKWVTFISLLFLFSSAYS). Positions 19 to 24 (RGVFRR) are excised as a propeptide. Albumin domains are found at residues 19–210 (RGVF…DALE), 211–403 (GKSL…EFQP), and 404–601 (LVDE…KLVE). Histidine 27 is a Cu cation binding site. Position 29 is a phosphoserine (serine 29). Ca(2+) is bound by residues glutamate 30 and aspartate 37. Cysteine 77 and cysteine 86 form a disulfide bridge. Residues serine 82 and serine 89 each carry the phosphoserine modification. Histidine 91 serves as a coordination point for Zn(2+). Intrachain disulfides connect cysteine 99/cysteine 115, cysteine 114/cysteine 125, cysteine 148/cysteine 193, cysteine 192/cysteine 201, cysteine 224/cysteine 270, and cysteine 269/cysteine 277. A Phosphothreonine modification is found at threonine 107. Lysine 229 carries the post-translational modification N6-succinyllysine. Residue glutamate 268 coordinates Ca(2+). Zn(2+) is bound by residues histidine 271 and aspartate 273. Residues aspartate 273, glutamate 276, aspartate 279, and aspartate 283 each contribute to the Ca(2+) site. 8 cysteine pairs are disulfide-bonded: cysteine 289–cysteine 303, cysteine 302–cysteine 313, cysteine 340–cysteine 385, cysteine 384–cysteine 393, cysteine 416–cysteine 462, cysteine 461–cysteine 472, cysteine 485–cysteine 501, and cysteine 500–cysteine 511. Serine 297 is subject to Phosphoserine. Position 443 is a phosphoserine (serine 443). Phosphothreonine occurs at positions 444 and 446. Lysine 460 bears the N6-succinyllysine mark. Serine 513 carries the phosphoserine modification. 2 disulfide bridges follow: cysteine 538–cysteine 583 and cysteine 582–cysteine 591. Lysine 558 is subject to N6-methyllysine. Position 570 is a phosphothreonine (threonine 570). Lysine 588 is modified (N6-succinyllysine).

Belongs to the ALB/AFP/VDB family. As to quaternary structure, interacts with FCGRT; this interaction regulates ALB homeostasis. Interacts with TASOR. In plasma, occurs in a covalently-linked complex with chromophore-bound alpha-1-microglobulin; this interaction does not prevent fatty acid binding to ALB. Phosphorylated by FAM20C in the extracellular medium. In terms of tissue distribution, plasma.

Its subcellular location is the secreted. Functionally, binds water, Ca(2+), Na(+), K(+), fatty acids, hormones, bilirubin and drugs. Its main function is the regulation of the colloidal osmotic pressure of blood. Major zinc transporter in plasma, typically binds about 80% of all plasma zinc. Major calcium and magnesium transporter in plasma, binds approximately 45% of circulating calcium and magnesium in plasma. Potentially has more than two calcium-binding sites and might additionally bind calcium in a non-specific manner. The shared binding site between zinc and calcium at residue Asp-273 suggests a crosstalk between zinc and calcium transport in the blood. The rank order of affinity is zinc &gt; calcium &gt; magnesium. Binds to the bacterial siderophore enterobactin and inhibits enterobactin-mediated iron uptake of E.coli from ferric transferrin, and may thereby limit the utilization of iron and growth of enteric bacteria such as E.coli. Does not prevent iron uptake by the bacterial siderophore aerobactin. In Oryctolagus cuniculus (Rabbit), this protein is Albumin (ALB).